The chain runs to 882 residues: Protein translocase subunit SecA (882 aa).

Residues Gln79, 97–101 (GEGKT), and Asp487 contribute to the ATP site.

This sequence belongs to the SecA family.

It localises to the plastid. Its subcellular location is the chloroplast stroma. The protein localises to the chloroplast thylakoid membrane. It carries out the reaction ATP + H2O + cellular proteinSide 1 = ADP + phosphate + cellular proteinSide 2.. Has a central role in coupling the hydrolysis of ATP to the transfer of proteins across the thylakoid membrane. In Gracilaria tenuistipitata var. liui (Red alga), this protein is Protein translocase subunit SecA.